Here is a 483-residue protein sequence, read N- to C-terminus: Trehalose-6-phosphate synthase (483 aa).

R22 serves as a coordination point for D-glucose 6-phosphate. 42–43 provides a ligand contact to UDP-alpha-D-glucose; the sequence is GG. D-glucose 6-phosphate-binding residues include Y94 and D148. The UDP-alpha-D-glucose site is built by R290 and K295. A D-glucose 6-phosphate-binding site is contributed by R328. Position 393 to 397 (393 to 397) interacts with UDP-alpha-D-glucose; sequence LVAKE.

Belongs to the glycosyltransferase 20 family. Homotetramer.

It catalyses the reaction ADP-alpha-D-glucose + D-glucose 6-phosphate = alpha,alpha-trehalose 6-phosphate + ADP + H(+). The enzyme catalyses CDP-alpha-D-glucose + D-glucose 6-phosphate = alpha,alpha-trehalose 6-phosphate + CDP + H(+). The catalysed reaction is GDP-alpha-D-glucose + D-glucose 6-phosphate = alpha,alpha-trehalose 6-phosphate + GDP + H(+). It carries out the reaction TDP-alpha-D-glucose + D-glucose 6-phosphate = 5-methyl-UDP + alpha,alpha-trehalose 6-phosphate + H(+). It catalyses the reaction D-glucose 6-phosphate + UDP-alpha-D-glucose = alpha,alpha-trehalose 6-phosphate + UDP + H(+). The protein operates within glycan biosynthesis; trehalose biosynthesis. Probably involved in the osmoprotection via the biosynthesis of trehalose and in the production of glycogen and alpha-glucan via the TreS-Pep2 branch involved in the biosynthesis of maltose-1-phosphate (M1P). Catalyzes the transfer of glucose from UDP-glucose (UDP-Glc) to D-glucose 6-phosphate (Glc-6-P) to form trehalose-6-phosphate. Probably also able to use ADP-Glc, CDP-Glc, GDP-Glc and TDP-Glc as glucosyl donors. The chain is Trehalose-6-phosphate synthase from Mycobacterium sp. (strain JLS).